We begin with the raw amino-acid sequence, 319 residues long: Carbonic anhydrase, chloroplastic (319 aa).

Residues Met1–Ser98 constitute a chloroplast transit peptide.

This sequence belongs to the beta-class carbonic anhydrase family. Homohexamer.

It is found in the plastid. The protein localises to the chloroplast stroma. It carries out the reaction hydrogencarbonate + H(+) = CO2 + H2O. Reversible hydration of carbon dioxide. The polypeptide is Carbonic anhydrase, chloroplastic (Spinacia oleracea (Spinach)).